The sequence spans 91 residues: Small ribosomal subunit protein uS19 (91 aa).

Belongs to the universal ribosomal protein uS19 family.

Functionally, protein S19 forms a complex with S13 that binds strongly to the 16S ribosomal RNA. The protein is Small ribosomal subunit protein uS19 of Marinomonas sp. (strain MWYL1).